We begin with the raw amino-acid sequence, 153 residues long: ATP synthase subunit b' (153 aa).

Residues 20-40 (TLPLMAVQVVLLTFILNALFF) traverse the membrane as a helical segment.

Belongs to the ATPase B chain family. F-type ATPases have 2 components, F(1) - the catalytic core - and F(0) - the membrane proton channel. F(1) has five subunits: alpha(3), beta(3), gamma(1), delta(1), epsilon(1). F(0) has four main subunits: a(1), b(1), b'(1) and c(10-14). The alpha and beta chains form an alternating ring which encloses part of the gamma chain. F(1) is attached to F(0) by a central stalk formed by the gamma and epsilon chains, while a peripheral stalk is formed by the delta, b and b' chains.

Its subcellular location is the cellular thylakoid membrane. F(1)F(0) ATP synthase produces ATP from ADP in the presence of a proton or sodium gradient. F-type ATPases consist of two structural domains, F(1) containing the extramembraneous catalytic core and F(0) containing the membrane proton channel, linked together by a central stalk and a peripheral stalk. During catalysis, ATP synthesis in the catalytic domain of F(1) is coupled via a rotary mechanism of the central stalk subunits to proton translocation. Its function is as follows. Component of the F(0) channel, it forms part of the peripheral stalk, linking F(1) to F(0). The b'-subunit is a diverged and duplicated form of b found in plants and photosynthetic bacteria. The protein is ATP synthase subunit b' of Prochlorococcus marinus (strain MIT 9211).